Here is a 474-residue protein sequence, read N- to C-terminus: ATP synthase subunit beta (474 aa).

151-158 (GGAGVGKT) lines the ATP pocket.

It belongs to the ATPase alpha/beta chains family. As to quaternary structure, F-type ATPases have 2 components, CF(1) - the catalytic core - and CF(0) - the membrane proton channel. CF(1) has five subunits: alpha(3), beta(3), gamma(1), delta(1), epsilon(1). CF(0) has three main subunits: a(1), b(2) and c(9-12). The alpha and beta chains form an alternating ring which encloses part of the gamma chain. CF(1) is attached to CF(0) by a central stalk formed by the gamma and epsilon chains, while a peripheral stalk is formed by the delta and b chains.

It is found in the cell inner membrane. The enzyme catalyses ATP + H2O + 4 H(+)(in) = ADP + phosphate + 5 H(+)(out). Produces ATP from ADP in the presence of a proton gradient across the membrane. The catalytic sites are hosted primarily by the beta subunits. The protein is ATP synthase subunit beta of Paracoccus denitrificans (strain Pd 1222).